A 1157-amino-acid polypeptide reads, in one-letter code: Voltage-dependent calcium channel subunit alpha-2/delta-2 (1157 aa).

A signal peptide spans 1 to 18 (MAVPARTCGASWPGPVRT). The tract at residues 1-37 (MAVPARTCGASWPGPVRTARPWPGRGPRPCPDPRGPA) is disordered. Topologically, residues 19 to 1119 (ARPWPGRGPR…TEDTSDCGRG (1101 aa)) are extracellular. The span at 24-34 (GRGPRPCPDPR) shows a compositional bias: pro residues. The N-linked (GlcNAc...) asparagine glycan is linked to asparagine 205. One can recognise a VWFA domain in the interval 294–472 (DMVIIVDVSG…INTQEYLDVL (179 aa)). The a divalent metal cation site is built by aspartate 300, serine 302, and serine 304. Positions 300 to 304 (DVSGS) match the MIDAS-like motif motif. Residues asparagine 389, asparagine 421, asparagine 510, asparagine 543, asparagine 627, and asparagine 864 are each glycosylated (N-linked (GlcNAc...) asparagine). Cysteine 446 and cysteine 1104 are oxidised to a cystine. The Cache domain occupies 488-577 (WTNVYEDALG…KPQITNFREP (90 aa)). Residues 1120–1140 (ASFPPSLGVLVSLQLLLLLGL) traverse the membrane as a helical segment. At 1141–1157 (PPRPQPQIHSFTPSRRL) the chain is on the cytoplasmic side.

Belongs to the calcium channel subunit alpha-2/delta family. As to quaternary structure, dimer formed of alpha-2-2 and delta-2 chains; disulfide-linked. Voltage-dependent calcium channels are multisubunit complexes, consisting of alpha-1 (CACNA1), alpha-2 (CACNA2D), beta (CACNB) and delta (CACNA2D) subunits in a 1:1:1:1 ratio. N-glycosylated. Post-translationally, may be proteolytically processed into subunits alpha-2-2 and delta-2 that are disulfide-linked. It is however unclear whether such cleavage really takes place in vivo and has a functional role. In heart, it is highly expressed in atrium and at lower level in ventricle.

It is found in the membrane. In terms of biological role, the alpha-2/delta subunit of voltage-dependent calcium channels regulates calcium current density and activation/inactivation kinetics of the calcium channel. Acts as a regulatory subunit for P/Q-type calcium channel (CACNA1A), N-type (CACNA1B), L-type (CACNA1C OR CACNA1D) and possibly T-type (CACNA1G). Overexpression induces apoptosis. In Rattus norvegicus (Rat), this protein is Voltage-dependent calcium channel subunit alpha-2/delta-2 (Cacna2d2).